A 143-amino-acid chain; its full sequence is Hemoglobin-1 (143 aa).

Ser-2 carries the N-acetylserine modification. Residues 2–143 (SLSAAQKDNV…ALMGMIRPNM (142 aa)) enclose the Globin domain. His-97 serves as a coordination point for heme b.

It belongs to the globin family. As to quaternary structure, monomer.

The protein localises to the cytoplasm. Its function is as follows. Serves to transport hydrogen sulfide to autotrophic bacteria. The protein is Hemoglobin-1 of Phacoides pectinatus (Thick lucine).